A 585-amino-acid polypeptide reads, in one-letter code: Organic cation transporter 1 (585 aa).

Topologically, residues 1–40 (MSFQAMETFAEISQEILMSATKPPDFDFVLEQVGNYGTYQ) are cytoplasmic. The chain crosses the membrane as a helical span at residues 41 to 61 (IVFFFIICLPTSLPSAFSAFN). At 62–155 (IPFVVGNPPH…LVCDQQAWIE (94 aa)) the chain is on the extracellular side. N-linked (GlcNAc...) asparagine glycans are attached at residues asparagine 87, asparagine 98, and asparagine 133. The helical transmembrane segment at 156–176 (ISTTSFYVGSFIGNCLFGYVA) threads the bilayer. Residues 177–184 (DKFGRRRS) are Cytoplasmic-facing. A helical transmembrane segment spans residues 185 to 205 (FFVILTVLIVCGTASSFAKDI). Topologically, residues 206–212 (ESFIILR) are extracellular. The helical transmembrane segment at 213-233 (FFTGLAFPALFQIPFIICMEF) threads the bilayer. The Cytoplasmic segment spans residues 234–243 (MGNSGRIFSG). A helical membrane pass occupies residues 244–264 (LMTSLFFGAAMALLGVVAMFI). Topologically, residues 265–269 (RRWRQ) are extracellular. Residues 270 to 290 (LTFFCNAPFAFYIIYYFFLPE) form a helical membrane-spanning segment. Topologically, residues 291–360 (SPRWSVSVGK…FKTPNLRRKT (70 aa)) are cytoplasmic. A helical transmembrane segment spans residues 361-381 (LIVTYIWVMNAIIYNGLTLNV). Residues 382 to 389 (SNLPVDDY) are Extracellular-facing. A helical transmembrane segment spans residues 390–410 (WSFIINGAVELPGYFVVWPLL). The Cytoplasmic segment spans residues 411–416 (QCAGRR). The helical transmembrane segment at 417-437 (WTLAATMIVCGIGCVSAMFMP) threads the bilayer. Residues 438-446 (DGYPWLVAS) are Extracellular-facing. Residues 447–467 (ASFIGKFGVGSGFAVIYIFAG) form a helical membrane-spanning segment. Over 468 to 476 (ELYPTVVRA) the chain is Cytoplasmic. A helical membrane pass occupies residues 477 to 497 (IGMGMSSMVAGSGLLLAPHIV). Topologically, residues 498 to 504 (NLGKIVK) are extracellular. A helical transmembrane segment spans residues 505–525 (ILPLLIMGLMALSAGILTFFL). Residues 526–585 (PETLGAPLPMTIEDAENFGKKPEPDSGMFTQAAKKRESQPLLEPHTPMDRRRRSSRLMNI) are Cytoplasmic-facing. The interval 544–585 (GKKPEPDSGMFTQAAKKRESQPLLEPHTPMDRRRRSSRLMNI) is disordered. The segment covering 575-585 (RRRRSSRLMNI) has biased composition (basic residues).

This sequence belongs to the major facilitator (TC 2.A.1) superfamily. Organic cation transporter (TC 2.A.1.19) family.

It localises to the membrane. Transports organic cations such as tetraethylammonium (TEA). Displays a broad substrate specificity. The polypeptide is Organic cation transporter 1 (oct-1) (Caenorhabditis elegans).